The sequence spans 399 residues: Stearoyl-[acyl-carrier-protein] 9-desaturase, seed specific, chloroplastic (399 aa).

The transit peptide at 1–34 directs the protein to the chloroplast; the sequence is MALKFNPLVSQPYKLASSARPPVSTFRSPKFLCL. Fe cation-binding residues include E141, E179, H182, E232, E265, and H268.

The protein belongs to the fatty acid desaturase type 2 family. In terms of assembly, homodimer. Fe(2+) serves as cofactor. In terms of tissue distribution, developing seeds.

Its subcellular location is the plastid. It localises to the chloroplast. It carries out the reaction octadecanoyl-[ACP] + 2 reduced [2Fe-2S]-[ferredoxin] + O2 + 2 H(+) = (9Z)-octadecenoyl-[ACP] + 2 oxidized [2Fe-2S]-[ferredoxin] + 2 H2O. It functions in the pathway lipid metabolism; fatty acid metabolism. Functionally, converts stearoyl-ACP to oleoyl-ACP by introduction of a cis double bond between carbons Delta(9) and Delta(10) of the acyl chain. The sequence is that of Stearoyl-[acyl-carrier-protein] 9-desaturase, seed specific, chloroplastic from Brassica napus (Rape).